The primary structure comprises 151 residues: FUN14 domain-containing protein 1 (151 aa).

A YXXL motif is present at residues 14–17; the sequence is YEVL. Transmembrane regions (helical) follow at residues 44–64, 71–91, and 130–150; these read YSVA…GFLF, AATA…GGYI, and FIKK…LGLA.

This sequence belongs to the FUN14 family.

It is found in the mitochondrion outer membrane. Its function is as follows. Acts as an activator of hypoxia-induced mitophagy, an important mechanism for mitochondrial quality control. The sequence is that of FUN14 domain-containing protein 1 (fundc1) from Xenopus tropicalis (Western clawed frog).